Here is a 387-residue protein sequence, read N- to C-terminus: Peptostreptococcal albumin-binding protein (387 aa).

The N-terminal stretch at 1–26 (MKLNKKLLMAALAGAIVVGGGVNTFA) is a signal peptide. A disordered region spans residues 122–155 (LFDKHELGGLGKDKGPGRFDENGWENNEHGYETR). Residues 213 to 265 (TIDQWLLKNAKEDAIAELKKAGITSDFYFNAINKAKTVEEVNALKNEILKAHA) form a GA module region. The interval 266–360 (GKEVNPSTPE…EKAALPEAGR (95 aa)) is disordered. A compositionally biased stretch (polar residues) spans 270-282 (NPSTPEVTPSVPQ). Over residues 298 to 360 (GTKEDGKKEN…EKAALPEAGR (63 aa)) the composition is skewed to basic and acidic residues. The LPXTG sorting signal signature appears at 355–359 (LPEAG). A358 carries the post-translational modification Pentaglycyl murein peptidoglycan amidated alanine. Residues 359-387 (GRRKAEILTLAAASLSSVAGAFISLKKRK) constitute a propeptide, removed by sortase.

Its subcellular location is the secreted. The protein localises to the cell wall. Its function is as follows. Binds serum albumin. The sequence is that of Peptostreptococcal albumin-binding protein (pab) from Finegoldia magna (Peptostreptococcus magnus).